Here is a 377-residue protein sequence, read N- to C-terminus: Actin-related protein T2 (377 aa).

Belongs to the actin family.

The protein resides in the cytoplasm. Its subcellular location is the cytoskeleton. This is Actin-related protein T2 (Actrt2) from Mus musculus (Mouse).